An 85-amino-acid polypeptide reads, in one-letter code: Putative membrane protein insertion efficiency factor (85 aa).

This sequence belongs to the UPF0161 family.

It is found in the cell inner membrane. Its function is as follows. Could be involved in insertion of integral membrane proteins into the membrane. The protein is Putative membrane protein insertion efficiency factor of Vibrio atlanticus (strain LGP32) (Vibrio splendidus (strain Mel32)).